A 451-amino-acid chain; its full sequence is MDRFIRMLEDRVMPVAGKIAEQRHLQAIRDGIILSMPLLIIGSLFLIVGFLPIPGYNEWMAKWFGEHWLDKLLYPVGATFDIMALVVSFGVAYRLAEKYKVDALSAGAISLAAFLLATPYQVPFTPEGAKETIMVSGGIPVQWVGSKGLFVAMILAIVSTEIYRKIIQKNIVIKLPDGVPPAVARSFVALIPGAAVLVVVWVARLILEMTPFESFHNIVSVLLNKPLSVLGGSVFGAIVAVLLVQLLWSTGLHGAAIVGGVMGPIWLSLMDENRMVFQQNPNAELPNVITQQFFDLWIYIGGSGATLALALTMMFRARSRQLKSLGRLAIAPGIFNINEPITFGMPIVMNPLLIIPFILVPVVLVVVSYAAMATGLVAKPSGVAVPWTTPIVISGYLATGGKISGSILQIVNFFIAFAIYYPFFSIWDKQKAAEEQADPTISSGAGATHSL.

Positions 8 to 423 (LEDRVMPVAG…FIAFAIYYPF (416 aa)) constitute a PTS EIIC type-3 domain. Helical transmembrane passes span 31–51 (GIIL…VGFL), 72–92 (LLYP…FGVA), 104–124 (LSAG…QVPF), 138–158 (GIPV…LAIV), 187–207 (FVAL…RLIL), 227–247 (LSVL…VQLL), 250–270 (TGLH…LSLM), 293–313 (FFDL…ALTM), 347–367 (IVMN…LVVV), and 407–427 (ILQI…FSIW).

It is found in the cell membrane. Functionally, the phosphoenolpyruvate-dependent sugar phosphotransferase system (sugar PTS), a major carbohydrate active transport system, catalyzes the phosphorylation of incoming sugar substrates concomitantly with their translocation across the cell membrane. The enzyme II CelABD PTS system is involved in cellobiose transport. In Geobacillus stearothermophilus (Bacillus stearothermophilus), this protein is PTS system cellobiose-specific EIIC component.